Here is a 341-residue protein sequence, read N- to C-terminus: Glyceraldehyde-3-phosphate dehydrogenase 2 (341 aa).

Residues R12 to I13, R78, and T120 contribute to the NAD(+) site. Residues S152–T154 and T183 contribute to the D-glyceraldehyde 3-phosphate site. C153 functions as the Nucleophile in the catalytic mechanism. N184 provides a ligand contact to NAD(+). Residues R198, T211–G212, and R234 contribute to the D-glyceraldehyde 3-phosphate site. Position 313 (N313) interacts with NAD(+).

Belongs to the glyceraldehyde-3-phosphate dehydrogenase family. As to quaternary structure, homotetramer.

It is found in the cytoplasm. The catalysed reaction is D-glyceraldehyde 3-phosphate + phosphate + NAD(+) = (2R)-3-phospho-glyceroyl phosphate + NADH + H(+). It functions in the pathway carbohydrate degradation; glycolysis; pyruvate from D-glyceraldehyde 3-phosphate: step 1/5. Catalyzes the oxidative phosphorylation of glyceraldehyde 3-phosphate (G3P) to 1,3-bisphosphoglycerate (BPG) using the cofactor NAD. The first reaction step involves the formation of a hemiacetal intermediate between G3P and a cysteine residue, and this hemiacetal intermediate is then oxidized to a thioester, with concomitant reduction of NAD to NADH. The reduced NADH is then exchanged with the second NAD, and the thioester is attacked by a nucleophilic inorganic phosphate to produce BPG. In Staphylococcus aureus (strain MRSA252), this protein is Glyceraldehyde-3-phosphate dehydrogenase 2 (gapA2).